The chain runs to 518 residues: T-box transcription factor TBX5 (518 aa).

Residues Met-1 to Phe-46 form a disordered region. Residues Leu-15–Pro-28 are compositionally biased toward basic and acidic residues. Residues Ala-34 to Ala-45 are compositionally biased toward low complexity. A DNA-binding region (T-box) is located at residues Leu-58–Gly-238. Residues Met-250–Ser-356 form a disordered region. A compositionally biased stretch (polar residues) spans Thr-262 to Ser-301. N6-acetyllysine is present on Lys-339.

In terms of assembly, monomer. Homodimer (via the T-box); binds DNA as homodimer. Interacts (via the T-box) with NKX2-5 (via the homeobox); this complex binds DNA. Interacts with GATA4. Interacts with KAT2A and KAT2B. Acetylation at Lys-339 by KAT2A and KAT2B promotes nuclear retention.

The protein localises to the nucleus. Its subcellular location is the cytoplasm. In terms of biological role, DNA-binding protein that regulates the transcription of several genes and is involved in heart development and limb pattern formation. Binds to the core DNA motif of NPPA promoter. The sequence is that of T-box transcription factor TBX5 (TBX5) from Homo sapiens (Human).